Here is a 78-residue protein sequence, read N- to C-terminus: UPF0335 protein RrIowa_0193 (78 aa).

Belongs to the UPF0335 family.

The protein is UPF0335 protein RrIowa_0193 of Rickettsia rickettsii (strain Iowa).